We begin with the raw amino-acid sequence, 309 residues long: Malate dehydrogenase (309 aa).

Residues 9–14 (GAGFVG) and Asp-33 contribute to the NAD(+) site. Substrate-binding residues include Arg-82 and Arg-88. Residues Asn-95 and 118–120 (VNN) contribute to the NAD(+) site. Asn-120 and Arg-151 together coordinate substrate. The Proton acceptor role is filled by His-175.

Belongs to the LDH/MDH superfamily. MDH type 3 family.

The catalysed reaction is (S)-malate + NAD(+) = oxaloacetate + NADH + H(+). Its function is as follows. Catalyzes the reversible oxidation of malate to oxaloacetate. This Chloroflexus aggregans (strain MD-66 / DSM 9485) protein is Malate dehydrogenase.